The primary structure comprises 64 residues: Large ribosomal subunit protein bL35 (64 aa).

This sequence belongs to the bacterial ribosomal protein bL35 family.

The sequence is that of Large ribosomal subunit protein bL35 from Carboxydothermus hydrogenoformans (strain ATCC BAA-161 / DSM 6008 / Z-2901).